The sequence spans 221 residues: Deoxyribose-phosphate aldolase (221 aa).

Asp89 functions as the Proton donor/acceptor in the catalytic mechanism. Lys151 (schiff-base intermediate with acetaldehyde) is an active-site residue. Catalysis depends on Lys180, which acts as the Proton donor/acceptor.

This sequence belongs to the DeoC/FbaB aldolase family. DeoC type 1 subfamily.

The protein resides in the cytoplasm. The catalysed reaction is 2-deoxy-D-ribose 5-phosphate = D-glyceraldehyde 3-phosphate + acetaldehyde. Its pathway is carbohydrate degradation; 2-deoxy-D-ribose 1-phosphate degradation; D-glyceraldehyde 3-phosphate and acetaldehyde from 2-deoxy-alpha-D-ribose 1-phosphate: step 2/2. In terms of biological role, catalyzes a reversible aldol reaction between acetaldehyde and D-glyceraldehyde 3-phosphate to generate 2-deoxy-D-ribose 5-phosphate. This chain is Deoxyribose-phosphate aldolase, found in Mesomycoplasma hyopneumoniae (strain 232) (Mycoplasma hyopneumoniae).